The sequence spans 269 residues: MVRIAIAGAAGRMGRNLVKASHINPDASVTAGSERPESSLVGVDIGELCGEGKFDVFLTDDLEKEVDNFDVVIDFTVPVSTLANLELCKQHGKSIVIGTTGFSEEERALIDAVAKHVPVVMAPNYSVGVNLVFKLLEKAAKVMGDYCDVEIVEAHHRHKVDAPSGTAIGMGEAIAGAMGNKLSDVAVYAREGITGERTKDEIGFATIRAGDIVGEHTAMFADIGERVEITHKATDRMTFANGAVKAAVWLHSKPAGFYTMTDVLGLNEL.

NAD(+) contacts are provided by residues 8-13 and Glu-34; that span reads GAAGRM. Residue Arg-35 participates in NADP(+) binding. Residues 98–100 and 122–125 each bind NAD(+); these read GTT and APNY. The Proton donor/acceptor role is filled by His-155. Residue His-156 coordinates (S)-2,3,4,5-tetrahydrodipicolinate. Lys-159 functions as the Proton donor in the catalytic mechanism. Residue 165 to 166 participates in (S)-2,3,4,5-tetrahydrodipicolinate binding; sequence GT.

Belongs to the DapB family.

The protein localises to the cytoplasm. It carries out the reaction (S)-2,3,4,5-tetrahydrodipicolinate + NAD(+) + H2O = (2S,4S)-4-hydroxy-2,3,4,5-tetrahydrodipicolinate + NADH + H(+). It catalyses the reaction (S)-2,3,4,5-tetrahydrodipicolinate + NADP(+) + H2O = (2S,4S)-4-hydroxy-2,3,4,5-tetrahydrodipicolinate + NADPH + H(+). The protein operates within amino-acid biosynthesis; L-lysine biosynthesis via DAP pathway; (S)-tetrahydrodipicolinate from L-aspartate: step 4/4. Its function is as follows. Catalyzes the conversion of 4-hydroxy-tetrahydrodipicolinate (HTPA) to tetrahydrodipicolinate. In Vibrio parahaemolyticus serotype O3:K6 (strain RIMD 2210633), this protein is 4-hydroxy-tetrahydrodipicolinate reductase.